Reading from the N-terminus, the 171-residue chain is Nicotinamide-nucleotide adenylyltransferase (171 aa).

Belongs to the archaeal NMN adenylyltransferase family.

The protein resides in the cytoplasm. The enzyme catalyses beta-nicotinamide D-ribonucleotide + ATP + H(+) = diphosphate + NAD(+). Its pathway is cofactor biosynthesis; NAD(+) biosynthesis; NAD(+) from nicotinamide D-ribonucleotide: step 1/1. The chain is Nicotinamide-nucleotide adenylyltransferase from Ignicoccus hospitalis (strain KIN4/I / DSM 18386 / JCM 14125).